The primary structure comprises 329 residues: COP9 signalosome complex subunit 6 (329 aa).

Positions 44-175 (TRVKAQAACS…VTIYESELHV (132 aa)) constitute an MPN domain.

The protein belongs to the peptidase M67A family. CSN6 subfamily. Component of the CSN complex, probably composed of CSN1, CSN2, CSN3, CSN4, CSN5, CSN6, CSN7 and CSN8.

In terms of biological role, component of the COP9 signalosome complex (CSN), a complex involved in various cellular and developmental processes such as photomorphogenesis and response to hormones. The CSN complex is an essential regulator of the ubiquitin (Ubl) conjugation pathway by mediating the deneddylation of the cullin subunits of SCF-type E3 ligase complexes, leading to decrease the Ubl ligase activity of SCF. Involved in early response to iron deficiency. This is COP9 signalosome complex subunit 6 from Oryza sativa subsp. japonica (Rice).